A 409-amino-acid chain; its full sequence is MNRIGIIGGGASGIVAAIAAARSDGDAQVFILEQKENIGKKILATGNGRCNLTNEAMDASCYHGEDPEFARNVLKQFGYGETLEFFASLGLFTKSRGGYIYPRSDQAASVLELLEMELRRQKVKIYTGVRVEALKLSAKGFVIRADGQRFPADRVILACGGKASKSLGSDGSGYALARSMGHTLSPVVPALVQLKVKKHPFAKAAGVRTDAKVAALLGRQVLAEDTGEMQITAYGISGIPVFQISRHIAKGLYEGKEMKVRVDFLPEMEASQVRKAFNTHLDKCPYATCQEFLTGIFPKKLIPRLLELSHIRQNFPASELKPAQWEDLIRACKQTLLTIEDTNGFDNAQVCAGGVRTGEVYPDTLESRYADGLYLTGELLDVEGICGGYNLQWAWATGYLAGRAAAERP.

FAD contacts are provided by Ser12, Glu33, Val131, Glu378, Asn390, and Leu391.

It belongs to the BaiN/RdsA family. BaiN subfamily. FAD is required as a cofactor.

The catalysed reaction is 3-oxocholan-24-oyl-CoA + NAD(+) = 3-oxochol-4-en-24-oyl-CoA + NADH + H(+). It catalyses the reaction 3-oxochol-4-en-24-oyl-CoA + NAD(+) = 3-oxochol-4,6-dien-24-oyl-CoA + NADH + H(+). It carries out the reaction 12alpha-hydroxy-3-oxocholan-24-oyl-CoA + NAD(+) = 12alpha-hydroxy-3-oxochol-4-en-24-oyl-CoA + NADH + H(+). The enzyme catalyses 12alpha-hydroxy-3-oxochol-4-en-24-oyl-CoA + NAD(+) = 12alpha-hydroxy-3-oxochola-4,6-dien-24-oyl-CoA + NADH + H(+). It functions in the pathway lipid metabolism; bile acid degradation. In terms of biological role, involved in the secondary bile acid metabolism. Catalyzes two subsequent reductions of the double bonds within the bile acid A/B rings of 3-oxochol-4,6-dien-24-oyl-CoA and 12alpha-hydroxy-3-oxochol-4,6-dien-24-oyl-CoA to yield 3-oxocholan-24-oyl-CoA and 12alpha-hydroxy-3-oxocholan-24-oyl-CoA, respectively. This chain is 3-dehydro-bile acid delta(4,6)-reductase, found in Clostridium scindens (strain ATCC 35704 / DSM 5676 / VPI 13733 / 19).